We begin with the raw amino-acid sequence, 261 residues long: Kallikrein-2 (261 aa).

An N-terminal signal peptide occupies residues 1–18; the sequence is MWDLVLSIALSVGCTGAV. Positions 19-24 are cleaved as a propeptide — activation peptide; sequence PLIQSR. One can recognise a Peptidase S1 domain in the interval 25-258; that stretch reads IVGGWECEKH…YRKWIKDTIA (234 aa). Intrachain disulfides connect cysteine 31/cysteine 173, cysteine 50/cysteine 66, cysteine 152/cysteine 219, cysteine 184/cysteine 198, and cysteine 209/cysteine 234. Histidine 65 functions as the Charge relay system in the catalytic mechanism. N-linked (GlcNAc...) asparagine glycosylation is present at asparagine 102. Aspartate 120 acts as the Charge relay system in catalysis. The active-site Charge relay system is serine 213.

Belongs to the peptidase S1 family. Kallikrein subfamily.

It catalyses the reaction Preferential cleavage of Arg-|-Xaa bonds in small molecule substrates. Highly selective action to release kallidin (lysyl-bradykinin) from kininogen involves hydrolysis of Met-|-Xaa or Leu-|-Xaa.. Functionally, glandular kallikreins cleave Met-Lys and Arg-Ser bonds in kininogen to release Lys-bradykinin. This chain is Kallikrein-2 (KLK2), found in Homo sapiens (Human).